The chain runs to 163 residues: Crossover junction endodeoxyribonuclease RuvC (163 aa).

Active-site residues include D8, E68, and D140. D8, E68, and D140 together coordinate Mg(2+).

This sequence belongs to the RuvC family. Homodimer which binds Holliday junction (HJ) DNA. The HJ becomes 2-fold symmetrical on binding to RuvC with unstacked arms; it has a different conformation from HJ DNA in complex with RuvA. In the full resolvosome a probable DNA-RuvA(4)-RuvB(12)-RuvC(2) complex forms which resolves the HJ. Mg(2+) is required as a cofactor.

The protein localises to the cytoplasm. It catalyses the reaction Endonucleolytic cleavage at a junction such as a reciprocal single-stranded crossover between two homologous DNA duplexes (Holliday junction).. In terms of biological role, the RuvA-RuvB-RuvC complex processes Holliday junction (HJ) DNA during genetic recombination and DNA repair. Endonuclease that resolves HJ intermediates. Cleaves cruciform DNA by making single-stranded nicks across the HJ at symmetrical positions within the homologous arms, yielding a 5'-phosphate and a 3'-hydroxyl group; requires a central core of homology in the junction. The consensus cleavage sequence is 5'-(A/T)TT(C/G)-3'. Cleavage occurs on the 3'-side of the TT dinucleotide at the point of strand exchange. HJ branch migration catalyzed by RuvA-RuvB allows RuvC to scan DNA until it finds its consensus sequence, where it cleaves and resolves the cruciform DNA. In Erythrobacter litoralis (strain HTCC2594), this protein is Crossover junction endodeoxyribonuclease RuvC.